Consider the following 468-residue polypeptide: ATP synthase subunit beta (468 aa).

Residue 155–162 coordinates ATP; that stretch reads GGAGVGKT.

It belongs to the ATPase alpha/beta chains family. In terms of assembly, F-type ATPases have 2 components, CF(1) - the catalytic core - and CF(0) - the membrane proton channel. CF(1) has five subunits: alpha(3), beta(3), gamma(1), delta(1), epsilon(1). CF(0) has three main subunits: a(1), b(2) and c(9-12). The alpha and beta chains form an alternating ring which encloses part of the gamma chain. CF(1) is attached to CF(0) by a central stalk formed by the gamma and epsilon chains, while a peripheral stalk is formed by the delta and b chains.

The protein localises to the cell inner membrane. It carries out the reaction ATP + H2O + 4 H(+)(in) = ADP + phosphate + 5 H(+)(out). Functionally, produces ATP from ADP in the presence of a proton gradient across the membrane. The catalytic sites are hosted primarily by the beta subunits. In Thermotoga neapolitana (strain ATCC 49049 / DSM 4359 / NBRC 107923 / NS-E), this protein is ATP synthase subunit beta.